A 393-amino-acid polypeptide reads, in one-letter code: 5-azacytidine-induced protein 2 (393 aa).

The tract at residues 1–198 (MDALVEDDIC…IELQKAKQTD (198 aa)) is homodimerization. Residues 40–198 (ALVTAYEDIK…IELQKAKQTD (159 aa)) adopt a coiled-coil conformation. Positions 217–258 (SDNMQSAYWELKREMSNLHLVTQVQAELLRKLKTPAAIKKAC) are interaction with TBK1 and IKBKE. Position 319 is a phosphoserine (serine 319). Disordered stretches follow at residues 321–340 (TDHE…HNSY) and 345–393 (LEDN…HYKH). At serine 354 the chain carries Phosphoserine. Residues 384-393 (QHNQNCHYKH) are compositionally biased toward polar residues.

Homodimer. Interacts with IKBKE, TBK1 and TICAM1. Interacts with TAX1BP1. Interacts with CALCOCO2. Ubiquitinated via 'Lys-48'-linked polyubiquitination by TRIM38, leading to its degradation.

Its subcellular location is the cytoplasm. In terms of biological role, adapter protein which binds TBK1 and IKBKE playing a role in antiviral innate immunity. Activates serine/threonine-protein kinase TBK1 and facilitates its oligomerization. Enhances the phosphorylation of NF-kappa-B p65 subunit RELA by TBK1. Promotes TBK1-induced as well as TNF-alpha or PMA-induced activation of NF-kappa-B. Participates in IFNB promoter activation via TICAM1. The sequence is that of 5-azacytidine-induced protein 2 (AZI2) from Bos taurus (Bovine).